The following is a 134-amino-acid chain: Auxin-responsive protein SAUR40 (134 aa).

Belongs to the ARG7 family. As to quaternary structure, interacts with and inhibits PP2C-D subfamily of type 2C phosphatases such as PP2C67/PP2C-D1.

The protein resides in the cytoplasm. Its function is as follows. Provide a mechanistic link between auxin and plasma membrane H(+)-ATPases (PM H(+)-ATPases, e.g. AHA1 and AHA2), and triggers PM H(+)-ATPases activity by promoting phosphorylation of their C-terminal autoinhibitory domain as a result of PP2C-D subfamily of type 2C phosphatases inhibition, thus leading to the acidification of the apoplast and the facilitation of solutes and water uptake to drive cell expansion. Plays a role in the regulation of cell expansion, root meristem patterning and auxin transport. The protein is Auxin-responsive protein SAUR40 of Arabidopsis thaliana (Mouse-ear cress).